The chain runs to 512 residues: MLLSRLAHVSREVAATSARSRKIALLAELFRDADADDVPIVIPYLAGRLPQGRLGIGWKLLGRPVTPASEPSLTVRDVDARLTAVGAVTGTGSQAGRGRLMGELMAAATDVEQAFLRGLLTGEVRQGALDAVAVEGLAEATGAPPADVRRAVMLAGSLQTVARALLAEGPGALDGFRLTVGRPVLPMLAHTAGSVAEAVGKLGACAVEEKLDGIRVQLHRDGDHVRIYTRTLDDITDRLPELTAAALELKGDRFILDGEVIALDGNGRPRSFQEIAGRVGSRVDVAAAAASVPVSPVFFDALSVDGRDLLDLPFTERHAELARLVPEPLRVRRALVSGPDDGAAAETFLADTLARGHEGVVVKALDAPYSAGRRGASWLKVKPVHTLDLVVLAAEWGHGRRTGKLSNLHLGARAADGSFAMLGKTFKGMTDAMLTWQTERLTELAVEENGSVVTVRPELVVEIAYDGLQKSTRYPAGVTLRFARVVRYREDKTPAEADTVETLLAAHPEVTR.

Residue glutamate 208 coordinates ATP. Lysine 210 serves as the catalytic N6-AMP-lysine intermediate. ATP-binding residues include arginine 215, arginine 230, glutamate 259, phenylalanine 299, arginine 374, and lysine 380.

It belongs to the ATP-dependent DNA ligase family. Requires Mg(2+) as cofactor.

The catalysed reaction is ATP + (deoxyribonucleotide)n-3'-hydroxyl + 5'-phospho-(deoxyribonucleotide)m = (deoxyribonucleotide)n+m + AMP + diphosphate.. In terms of biological role, DNA ligase that seals nicks in double-stranded DNA during DNA replication, DNA recombination and DNA repair. The sequence is that of Probable DNA ligase from Streptomyces avermitilis (strain ATCC 31267 / DSM 46492 / JCM 5070 / NBRC 14893 / NCIMB 12804 / NRRL 8165 / MA-4680).